The primary structure comprises 337 residues: D-alanine--D-alanine ligase (337 aa).

One can recognise an ATP-grasp domain in the interval 124–330; the sequence is KMWFSALGIP…FTEYLSLVIN (207 aa). 154–209 lines the ATP pocket; the sequence is ALAQWGSIFVKAASQGSSVGCYKVDDSDKVAGVLKDAFGYAPYVIVEKTIKARELE. Asp284, Glu297, and Asn299 together coordinate Mg(2+).

This sequence belongs to the D-alanine--D-alanine ligase family. Requires Mg(2+) as cofactor. Mn(2+) serves as cofactor.

The protein resides in the cytoplasm. The catalysed reaction is 2 D-alanine + ATP = D-alanyl-D-alanine + ADP + phosphate + H(+). It participates in cell wall biogenesis; peptidoglycan biosynthesis. In terms of biological role, cell wall formation. This Shewanella baltica (strain OS195) protein is D-alanine--D-alanine ligase.